Consider the following 77-residue polypeptide: RNA-binding protein Hfq (77 aa).

The 61-residue stretch at 10-70 folds into the Sm domain; the sequence is DAFLNHVRKA…ISTIMPGQPI (61 aa).

Belongs to the Hfq family. In terms of assembly, homohexamer.

RNA chaperone that binds small regulatory RNA (sRNAs) and mRNAs to facilitate mRNA translational regulation in response to envelope stress, environmental stress and changes in metabolite concentrations. Also binds with high specificity to tRNAs. In Cereibacter sphaeroides (strain ATCC 17029 / ATH 2.4.9) (Rhodobacter sphaeroides), this protein is RNA-binding protein Hfq.